The primary structure comprises 413 residues: CinA-like protein (413 aa).

It belongs to the CinA family.

The polypeptide is CinA-like protein (Crocosphaera subtropica (strain ATCC 51142 / BH68) (Cyanothece sp. (strain ATCC 51142))).